A 70-amino-acid chain; its full sequence is Large ribosomal subunit protein eL38 (70 aa).

This sequence belongs to the eukaryotic ribosomal protein eL38 family.

The sequence is that of Large ribosomal subunit protein eL38 (RPL38) from Branchiostoma belcheri (Amphioxus).